Consider the following 151-residue polypeptide: Protein PLANT CADMIUM RESISTANCE 1 (151 aa).

2 helical membrane passes run 31 to 47 (ITLC…AEIV) and 54 to 71 (CCAA…TSCG).

It belongs to the cornifelin family. In terms of assembly, homopentamer. As to expression, expressed in aerial part, but not in roots. Detected in the guard and mesophyll cells.

The protein resides in the cell membrane. Its function is as follows. Involved in glutathione-independent cadmium resistance. Reduces cadmium uptake rather than activating efflux, but is not closely coupled to calcium transporter. In Arabidopsis thaliana (Mouse-ear cress), this protein is Protein PLANT CADMIUM RESISTANCE 1 (PCR1).